Reading from the N-terminus, the 354-residue chain is UDP-N-acetylglucosamine--N-acetylmuramyl-(pentapeptide) pyrophosphoryl-undecaprenol N-acetylglucosamine transferase (354 aa).

Residues 11–13, arginine 164, serine 194, and glutamine 289 each bind UDP-N-acetyl-alpha-D-glucosamine; that span reads TAG.

Belongs to the glycosyltransferase 28 family. MurG subfamily.

It localises to the cell membrane. The enzyme catalyses di-trans,octa-cis-undecaprenyl diphospho-N-acetyl-alpha-D-muramoyl-L-alanyl-D-glutamyl-meso-2,6-diaminopimeloyl-D-alanyl-D-alanine + UDP-N-acetyl-alpha-D-glucosamine = di-trans,octa-cis-undecaprenyl diphospho-[N-acetyl-alpha-D-glucosaminyl-(1-&gt;4)]-N-acetyl-alpha-D-muramoyl-L-alanyl-D-glutamyl-meso-2,6-diaminopimeloyl-D-alanyl-D-alanine + UDP + H(+). It participates in cell wall biogenesis; peptidoglycan biosynthesis. Its function is as follows. Cell wall formation. Catalyzes the transfer of a GlcNAc subunit on undecaprenyl-pyrophosphoryl-MurNAc-pentapeptide (lipid intermediate I) to form undecaprenyl-pyrophosphoryl-MurNAc-(pentapeptide)GlcNAc (lipid intermediate II). The polypeptide is UDP-N-acetylglucosamine--N-acetylmuramyl-(pentapeptide) pyrophosphoryl-undecaprenol N-acetylglucosamine transferase (Clostridium botulinum (strain ATCC 19397 / Type A)).